We begin with the raw amino-acid sequence, 146 residues long: Protein MucA (146 aa).

Catalysis depends on for autocatalytic cleavage activity residues serine 62 and lysine 99.

The protein belongs to the peptidase S24 family.

Functionally, involved in UV protection and mutation. The chain is Protein MucA (mucA) from Escherichia coli.